The following is a 144-amino-acid chain: Large ribosomal subunit protein uL22 (144 aa).

Positions 124–137 (RLKKRVLGQNKRKQ) are enriched in basic residues. A disordered region spans residues 124–144 (RLKKRVLGQNKRKQSVSGEKK).

The protein belongs to the universal ribosomal protein uL22 family. As to quaternary structure, part of the 50S ribosomal subunit.

Its function is as follows. This protein binds specifically to 23S rRNA; its binding is stimulated by other ribosomal proteins, e.g. L4, L17, and L20. It is important during the early stages of 50S assembly. It makes multiple contacts with different domains of the 23S rRNA in the assembled 50S subunit and ribosome. The globular domain of the protein is located near the polypeptide exit tunnel on the outside of the subunit, while an extended beta-hairpin is found that lines the wall of the exit tunnel in the center of the 70S ribosome. In Mycoplasmoides gallisepticum (strain R(low / passage 15 / clone 2)) (Mycoplasma gallisepticum), this protein is Large ribosomal subunit protein uL22.